The sequence spans 95 residues: Nucleoid-associated protein MMOB0740 (95 aa).

Belongs to the YbaB/EbfC family. Homodimer.

The protein resides in the cytoplasm. It is found in the nucleoid. Functionally, binds to DNA and alters its conformation. May be involved in regulation of gene expression, nucleoid organization and DNA protection. The protein is Nucleoid-associated protein MMOB0740 of Mycoplasma mobile (strain ATCC 43663 / 163K / NCTC 11711) (Mesomycoplasma mobile).